The sequence spans 512 residues: Histidine ammonia-lyase (512 aa).

Positions 143–145 form a cross-link, 5-imidazolinone (Ala-Gly); that stretch reads ASG. The residue at position 144 (Ser-144) is a 2,3-didehydroalanine (Ser).

The protein belongs to the PAL/histidase family. Contains an active site 4-methylidene-imidazol-5-one (MIO), which is formed autocatalytically by cyclization and dehydration of residues Ala-Ser-Gly.

It is found in the cytoplasm. The catalysed reaction is L-histidine = trans-urocanate + NH4(+). The protein operates within amino-acid degradation; L-histidine degradation into L-glutamate; N-formimidoyl-L-glutamate from L-histidine: step 1/3. This chain is Histidine ammonia-lyase, found in Ruegeria pomeroyi (strain ATCC 700808 / DSM 15171 / DSS-3) (Silicibacter pomeroyi).